A 751-amino-acid polypeptide reads, in one-letter code: Nibrin (751 aa).

One can recognise an FHA domain in the interval 24 to 83; it reads YVVGRKNCGILIENDQSISRNHAVLTVNFPVTSLSQTDEIPTLTIKDNSKYGTFVNEEKM. BRCT domains lie at 105–181 and 224–315; these read KFRV…SEFL and GKTF…LAVI. The mediates interaction with SP100 stretch occupies residues 111–328; that stretch reads EPLVVCSSCL…TENYCNPQGQ (218 aa). The interaction with MTOR, MAPKAP1 and RICTOR stretch occupies residues 221–403; the sequence is IFKGKTFVFL…SRKLSQETFN (183 aa). The residue at position 337 (Thr337) is a Phosphothreonine. At Ser343 the chain carries Phosphoserine; by ATM. 2 positions are modified to phosphoserine: Ser347 and Ser398. Residues 389 to 418 are disordered; that stretch reads GLEQSSRKLSQETFNIKEAPKPSSKANNVA. Ser433 is subject to Phosphoserine; by CDK2. Lys436 is covalently cross-linked (Glycyl lysine isopeptide (Lys-Gly) (interchain with G-Cter in ubiquitin)). 2 disordered regions span residues 444–479 and 491–550; these read KDWT…SSCK and EQTQ…RKRK. The span at 446–457 shows a compositional bias: polar residues; that stretch reads WTSQQQQNSIKN. Residues 461–467 carry the Nuclear localization signal motif; that stretch reads PCTRKRE. Composition is skewed to basic and acidic residues over residues 502–518 and 528–539; these read KSKE…READ and ELNRKSPDRKPL. Position 508 is a phosphoserine (Ser508). Glycyl lysine isopeptide (Lys-Gly) (interchain with G-Cter in SUMO2) cross-links involve residues Lys569 and Lys580. Residues 576–645 form a disordered region; that stretch reads VKVEKQEADD…ANSDGLQDSS (70 aa). Basic and acidic residues-rich tracts occupy residues 577 to 599 and 615 to 636; these read KVEK…ERNR and EDER…HEIA. Residues Lys684, Lys688, and Lys733 each participate in a glycyl lysine isopeptide (Lys-Gly) (interchain with G-Cter in ubiquitin) cross-link. Over residues 731–742 the composition is skewed to basic and acidic residues; that stretch reads QAKEESLADDLF. The disordered stretch occupies residues 731-751; the sequence is QAKEESLADDLFRYNPNVKRR. The FxF/Y motif signature appears at 738-747; that stretch reads ADDLFRYNPN.

The protein belongs to the Nibrin family. In terms of assembly, component of the MRN complex composed of two heterodimers RAD50 and MRE11 associated with a single NBN. The MRN complexes dimerize on DNA to form joined MRN-MRN oligomers required for DNA double-strand break repair. As part of the MRN complex, interacts with MCM9; the interaction recruits the complex to DNA repair sites. Component of the BASC complex, at least composed of BRCA1, MSH2, MSH6, MLH1, ATM, BLM, RAD50, MRE11 and NBN. Interacts with histone H2AX; this requires phosphorylation of H2AX on 'Ser-139' and promotes NBN recruitment to DNA damage sites. Interacts with (phosphorylated) MDC1; promoting NBN recruitment to DNA damage sites. Interacts with (phosphorylated) RAD17; promoting NBN recruitment to DNA damage sites. Interacts (via FxF/Y motif) with ATM. Interacts with HJURP. Interacts with INTS3. Interacts with KPNA2. Interacts with TERF2; interaction is disrupted upon NBN phosphorylation by CDK2. Interacts with (phosphorylated) RBBP8/CtIP; the interaction links the role of the MRN complex in DNA double-strand break sensing to resection. Interacts with SP100; recruits NBN to PML bodies. Interacts with ATF2. Interacts with MTOR, MAPKAP1 isoform 2 and RICTOR; indicative for an association with the mTORC2 complex. Interacts with MRNIP. Interacts with UFL1; promoting UFL1 recruitment to double-strand breaks following DNA damage. Interacts with CYREN (via XLF motif). Post-translationally, ubiquitinated at Lys-436 via 'Lys-6'-linked ubiquitin chains by RNF8, promoting NBN recruitment to DNA double-strand breaks (DSBs). Ubiquitinated at Lys-684 and Lys-688 via 'Lys-63'-linked ubiquitin chains by PELI1: ubiquitination takes place following PELI1 phosphorylation and promotes ATM activation and DNA repair. Ubiquitinated at Lys-733 via 'Lys-63'-linked ubiquitin chains by the SCF(SKP2) complex: ubiquitination takes place following SKP2 phosphorylation and promotes ATM activation and DNA repair. Phosphorylated by ATM in response of ionizing radiation, and such phosphorylation is responsible intra-S phase checkpoint control and telomere maintenance. Phosphorylated at Ser-433 by CDK2 in S/G2 phases abolishes interaction with TERF2, enabling DCLRE1B/Apollo recruitment to telomeres. Phosphorylation at Ser-433 in response to dysfunctional telomeres promotes non-homologous end joining repair at telomeres, while dephosphorylation by PPP1CA promotes microhomology-mediated end-joining (MMEJ) repair. In terms of tissue distribution, high expression in the liver, heart and testis. Low expression in all other tissues analyzed. In the cerebellum the postmitotic Purkinje cells are marked specifically.

The protein resides in the nucleus. It is found in the chromosome. Its subcellular location is the PML body. It localises to the telomere. In terms of biological role, component of the MRN complex, which plays a central role in double-strand break (DSB) repair, DNA recombination, maintenance of telomere integrity and meiosis. The MRN complex is involved in the repair of DNA double-strand breaks (DSBs) via homologous recombination (HR), an error-free mechanism which primarily occurs during S and G2 phases. The complex (1) mediates the end resection of damaged DNA, which generates proper single-stranded DNA, a key initial steps in HR, and is (2) required for the recruitment of other repair factors and efficient activation of ATM and ATR upon DNA damage. The MRN complex possesses single-strand endonuclease activity and double-strand-specific 3'-5' exonuclease activity, which are provided by MRE11, to initiate end resection, which is required for single-strand invasion and recombination. Within the MRN complex, NBN acts as a protein-protein adapter, which specifically recognizes and binds phosphorylated proteins, promoting their recruitment to DNA damage sites. Recruits MRE11 and RAD50 components of the MRN complex to DSBs in response to DNA damage. Promotes the recruitment of PI3/PI4-kinase family members ATM, ATR, and probably DNA-PKcs to the DNA damage sites, activating their functions. Mediates the recruitment of phosphorylated RBBP8/CtIP to DSBs, leading to cooperation between the MRN complex and RBBP8/CtIP to initiate end resection. RBBP8/CtIP specifically promotes the endonuclease activity of the MRN complex to clear DNA ends containing protein adducts. The MRN complex is also required for the processing of R-loops. NBN also functions in telomere length maintenance via its interaction with TERF2: interaction with TERF2 during G1 phase preventing recruitment of DCLRE1B/Apollo to telomeres. NBN also promotes DNA repair choice at dysfunctional telomeres: NBN phosphorylation by CDK2 promotes non-homologous end joining repair at telomeres, while unphosphorylated NBN promotes microhomology-mediated end-joining (MMEJ) repair. Enhances AKT1 phosphorylation possibly by association with the mTORC2 complex. This Mus musculus (Mouse) protein is Nibrin.